The following is a 759-amino-acid chain: TSK-associating protein 1 (759 aa).

The signal sequence occupies residues 1 to 29 (MEIYTMKTNFLVLALSLCILLSSFHEVSC). Positions 55-74 (GKDDEDQSAKIQSENQNNTT) are disordered. Polar residues predominate over residues 63–74 (AKIQSENQNNTT). EFE repeat repeat units lie at residues 91–138 (VGSV…DEEL), 139–176 (SAHR…DEEH), 177–215 (SAKR…DEEH), 216–254 (SAKR…DEEQ), 255–293 (SAKR…EEEH), 294–329 (AAKG…DKEH), 330–368 (FTAA…DDEQ), 369–407 (SAKR…NEEQ), 408–443 (SAKR…LEEE), and 444–473 (SAKR…DKEE). A 10 X approximate EFE repeat region spans residues 91-473 (VGSVSDESVG…GINAKADKEE (383 aa)). 2 coiled-coil regions span residues 142–461 (RQKM…FEEA) and 685–734 (IKKL…AKDE). Disordered stretches follow at residues 154 to 184 (EAAS…QSLL), 200 to 219 (QLKV…SAKR), 271 to 332 (AASK…HFTA), and 393 to 414 (LKAN…RKSM).

In terms of assembly, homomultimer. Interacts (via C-terminal domain) with GIP1, CSN1 (via N-terminal domain) and TSK (via TPR repeats). Binds calcium through the EFE repeats. Expressed preferentially in flowers and shoot apex.

The protein resides in the endoplasmic reticulum lumen. The protein localises to the nucleus envelope. It is found in the cytoplasm. Functionally, involved in seedling development in the dark. May be involved, when interacting with TSK, in the organization of spindle microtubules and may participate, when interacting with GIP1, in structural links between the nuclear envelope and the cytoskeleton. The protein is TSK-associating protein 1 (TSA1) of Arabidopsis thaliana (Mouse-ear cress).